Reading from the N-terminus, the 2376-residue chain is Serine/threonine-protein kinase WNK1 (2376 aa).

2 disordered regions span residues 1–78 (MSGG…EHRF) and 93–201 (ELPG…QQDD). Low complexity-rich tracts occupy residues 10-19 (SSPPGSLFLS) and 40-49 (GAAAADAGAG). Residues Ser15 and Ser19 each carry the phosphoserine modification. Basic and acidic residues predominate over residues 50–66 (RTEEYRRRRHTMDKDSR). Residue Thr60 is modified to Phosphothreonine. Residues 125–158 (TPAVAHVAQQPPAAATPGEPAAAVPAAASAPGSA) are compositionally biased toward low complexity. Ser172 is modified (phosphoserine). One can recognise a Protein kinase domain in the interval 219–477 (LKFDIEIGRG…IKDLLNHAFF (259 aa)). Ser229 is a binding site for ATP. Positions 281 and 297 each coordinate chloride. Residues 299–302 (TELM) and Lys349 contribute to the ATP site. The Proton acceptor role is filled by Asp366. The chloride site is built by Leu367 and Leu369. A phosphoserine; by autocatalysis mark is found at Ser376 and Ser380. The autoinhibitory domain stretch occupies residues 486-553 (ELAEEDDGEK…VCEGDHKTMA (68 aa)). The segment covering 571–586 (QLVREEQEKRKQEESS) has biased composition (basic and acidic residues). 3 disordered regions span residues 571–641 (QLVR…QLQY), 701–799 (AQPH…PVPT), and 1026–1118 (TTSS…SRPK). 2 stretches are compositionally biased toward low complexity: residues 587 to 601 (LKQQGEQQSSASQAG) and 614 to 624 (AAATTSASVST). Positions 627–637 (EPEEPEADQHQ) are interaction with KLHL3. Residues 708 to 752 (PPSSMAQGQSQGQPSSSSLTGIPSSQPVQHSQQQQGVQQTAPSQQ) are compositionally biased toward low complexity. Residues 753 to 766 (TVQYSLPQTSAPSE) show a composition bias toward polar residues. Positions 1045–1057 (PPEPVPAAPPQPT) are enriched in pro residues. Polar residues predominate over residues 1079-1089 (SDGNENVPSSS). The span at 1097 to 1118 (IKRHYRKSVRSRSRHEKTSRPK) shows a compositional bias: basic residues. Residues 1257 to 1260 (RFIV) carry the RFXV motif 1 motif. The residue at position 1261 (Ser1261) is a Phosphoserine. Disordered regions lie at residues 1459–1478 (STAAPGAKPPPVSSQQVSGS) and 1734–1770 (STIPAVKPGTAPSKPPSTKPPVLPLGTELPAGTPPSE). The segment covering 1746-1756 (SKPPSTKPPVL) has biased composition (pro residues). The RFXV motif 2 signature appears at 1853–1856 (RFQV). Residues 1862-1878 (DTQKEGKNKSEDVKSVH) show a composition bias toward basic and acidic residues. Residues 1862–1942 (DTQKEGKNKS…QPTKVGRFQV (81 aa)) form a disordered region. Over residues 1881–1899 (SSTSESSVLSSSSPESTLV) the composition is skewed to low complexity. Short sequence motifs (RFXV motif) lie at residues 1939–1942 (RFQV) and 1951–1954 (RFSV). Phosphoserine occurs at positions 1972, 1996, 2005, 2006, 2021, 2023, and 2026. 2 disordered regions span residues 1991–2033 (EKPE…LCSK) and 2110–2239 (AAAP…RKGT). Positions 2116–2128 (GRRRRPTKSKGSK) are enriched in basic residues. Residues 2129–2141 (SSRSSSLGNKSPG) show a composition bias toward low complexity. Polar residues-rich tracts occupy residues 2146 to 2161 (LSGQSTATVLHPQQTL) and 2169 to 2193 (ETGQNQLLQPLKPSPSSDNLYSAFT). Over residues 2207–2223 (GQGTSSTNTVGGTVSSQ) the composition is skewed to low complexity. The segment covering 2224 to 2238 (AAQAQPPTMTSSRKG) has biased composition (polar residues). An amphipathic alpha-helix region spans residues 2235 to 2255 (SRKGTFTDDLHKLVDNWARDA). A phosphoserine mark is found at Ser2264, Ser2280, Ser2364, and Ser2366.

Belongs to the protein kinase superfamily. Ser/Thr protein kinase family. WNK subfamily. In terms of assembly, interacts with WNK3. Interacts with WNK4; inhibiting the activity of WNK4. Interacts with SGK1; promoting its activation. Associates with the mTORC2 complex. Interacts with UVRAG. Interacts (via amphipathic alpha-helix region) with EMC2; promoting the ER membrane protein complex assembly. Mg(2+) is required as a cofactor. Autophosphorylated at Ser-376 and Ser-380, promoting its activity. Autophosphorylation at Ser-380 is inhibited by intracellular calcium. Phosphorylation at Thr-60 increases ability to activate SGK1. Post-translationally, ubiquitinated by the BCR(KLHL3) complex, leading to its degradation. Also ubiquitinated by the BCR(KLHL2) complex.

Its subcellular location is the cytoplasm. The protein resides in the nucleus. The protein localises to the cytoskeleton. It localises to the spindle. It catalyses the reaction L-seryl-[protein] + ATP = O-phospho-L-seryl-[protein] + ADP + H(+). The catalysed reaction is L-threonyl-[protein] + ATP = O-phospho-L-threonyl-[protein] + ADP + H(+). With respect to regulation, activated in response to hyperosmotic stress: cell shrinkage promotes formation of a membraneless compartment that concentrates WNK1 with its substrates, OXSR1/OSR1 and STK39/SPAK. Activation requires autophosphorylation of Ser-380 and, to a lower extent, Ser-376. Autophosphorylation and subsequent activation is inhibited by increases in intracellular ionic strength: Cl(-) potently inhibits WNK1 kinase activity via direct binding. Also inhibited by K(+) ions. Functionally, serine/threonine-protein kinase component of the WNK1-SPAK/OSR1 kinase cascade, which acts as a key regulator of blood pressure and regulatory volume increase by promoting ion influx. WNK1 mediates regulatory volume increase in response to hyperosmotic stress by acting as a molecular crowding sensor, which senses cell shrinkage and mediates formation of a membraneless compartment by undergoing liquid-liquid phase separation. The membraneless compartment concentrates WNK1 with its substrates, OXSR1/OSR1 and STK39/SPAK, promoting WNK1-dependent phosphorylation and activation of downstream kinases OXSR1/OSR1 and STK39/SPAK. Following activation, OXSR1/OSR1 and STK39/SPAK catalyze phosphorylation of ion cotransporters SLC12A1/NKCC2, SLC12A2/NKCC1, SLC12A5/KCC2 and SLC12A6/KCC3, regulating their activity. Phosphorylation of Na-K-Cl cotransporters SLC12A2/NKCC1 and SLC12A2/NKCC1 promote their activation and ion influx; simultaneously, phosphorylation of K-Cl cotransporters SLC12A5/KCC2 and SLC12A6/KCC3 inhibit their activity, blocking ion efflux. Also acts as a regulator of angiogenesis in endothelial cells via activation of OXSR1/OSR1 and STK39/SPAK: activation of OXSR1/OSR1 regulates chemotaxis and invasion, while STK39/SPAK regulates endothelial cell proliferation. Also acts independently of the WNK1-SPAK/OSR1 kinase cascade by catalyzing phosphorylation of other substrates, such as SYT2, PCF11 and NEDD4L. Mediates phosphorylation of SYT2, regulating SYT2 association with phospholipids and membrane-binding. Regulates mRNA export in the nucleus by mediating phosphorylation of PCF11, thereby decreasing the association between PCF11 and POLR2A/RNA polymerase II and promoting mRNA export to the cytoplasm. Acts as a negative regulator of autophagy. Required for the abscission step during mitosis, independently of the WNK1-SPAK/OSR1 kinase cascade. May also play a role in actin cytoskeletal reorganization. Also acts as a scaffold protein independently of its protein kinase activity: negatively regulates cell membrane localization of various transporters and channels, such as SLC4A4, SLC26A6, SLC26A9, TRPV4 and CFTR. Involved in the regulation of epithelial Na(+) channel (ENaC) by promoting activation of SGK1 in a kinase-independent manner: probably acts as a scaffold protein that promotes the recruitment of SGK1 to the mTORC2 complex in response to chloride, leading to mTORC2-dependent phosphorylation and activation of SGK1. Acts as an assembly factor for the ER membrane protein complex independently of its protein kinase activity: associates with EMC2 in the cytoplasm via its amphipathic alpha-helix, and prevents EMC2 ubiquitination and subsequent degradation, thereby promoting EMC2 stabilization. This is Serine/threonine-protein kinase WNK1 from Sus scrofa (Pig).